Consider the following 315-residue polypeptide: Ribosomal protein L11 methyltransferase (315 aa).

Residues Thr-163, Gly-184, Asp-206, and Asn-248 each contribute to the S-adenosyl-L-methionine site.

This sequence belongs to the methyltransferase superfamily. PrmA family.

The protein localises to the cytoplasm. The enzyme catalyses L-lysyl-[protein] + 3 S-adenosyl-L-methionine = N(6),N(6),N(6)-trimethyl-L-lysyl-[protein] + 3 S-adenosyl-L-homocysteine + 3 H(+). Methylates ribosomal protein L11. The polypeptide is Ribosomal protein L11 methyltransferase (Lacticaseibacillus paracasei (strain ATCC 334 / BCRC 17002 / CCUG 31169 / CIP 107868 / KCTC 3260 / NRRL B-441) (Lactobacillus paracasei)).